The primary structure comprises 550 residues: Chaperonin GroEL (550 aa).

Residues 30-33 (TLGP), lysine 51, 87-91 (DGTTT), glycine 415, 480-482 (NAA), and aspartate 496 each bind ATP.

The protein belongs to the chaperonin (HSP60) family. Forms a cylinder of 14 subunits composed of two heptameric rings stacked back-to-back. Interacts with the co-chaperonin GroES.

The protein localises to the cytoplasm. It carries out the reaction ATP + H2O + a folded polypeptide = ADP + phosphate + an unfolded polypeptide.. Functionally, together with its co-chaperonin GroES, plays an essential role in assisting protein folding. The GroEL-GroES system forms a nano-cage that allows encapsulation of the non-native substrate proteins and provides a physical environment optimized to promote and accelerate protein folding. The protein is Chaperonin GroEL of Variovorax paradoxus (strain S110).